The sequence spans 173 residues: Protein tyrosine phosphatase type IVA 3 (173 aa).

A Tyrosine-protein phosphatase domain is found at 8 to 161; it reads APVEVSYKHM…YRPKQRLRFK (154 aa). Residues Cys-49 and Cys-104 are joined by a disulfide bond. Residue Asp-72 is the Proton donor of the active site. Catalysis depends on Cys-104, which acts as the Phosphocysteine intermediate. Arg-110 is a substrate binding site. At Cys-170 the chain carries Cysteine methyl ester. Cys-170 carries S-farnesyl cysteine lipidation. The propeptide at 171-173 is removed in mature form; the sequence is CVM.

It belongs to the protein-tyrosine phosphatase family. In terms of assembly, interacts with tubulin. Farnesylated. Farnesylation is required for membrane targeting. Mainly expressed in cardiomyocytes and skeletal muscle; also found in pancreas. Consistently overexpressed in colon cancer metastasis.

It localises to the cell membrane. It is found in the early endosome. It carries out the reaction O-phospho-L-tyrosyl-[protein] + H2O = L-tyrosyl-[protein] + phosphate. With respect to regulation, inhibited by sodium orthovanadate and peroxovanadium compounds, and by pentamidine. Protein tyrosine phosphatase which stimulates progression from G1 into S phase during mitosis. Enhances cell proliferation, cell motility and invasive activity, and promotes cancer metastasis. May be involved in the progression of cardiac hypertrophy by inhibiting intracellular calcium mobilization in response to angiotensin II. This Homo sapiens (Human) protein is Protein tyrosine phosphatase type IVA 3 (PTP4A3).